Reading from the N-terminus, the 428-residue chain is Cyclic AMP-responsive element-binding protein 3-like protein 3-B (428 aa).

The Cytoplasmic segment spans residues 1–286 (MDHYSDQGGD…VMNGSNKPVQ (286 aa)). Residues 67–83 (VSGSPVWSPSPSDSGIS) are compositionally biased toward low complexity. Residues 67–104 (VSGSPVWSPSPSDSGISEDPHSDHIDSPPPNASPPMEP) are disordered. Pro residues predominate over residues 93 to 103 (SPPPNASPPME). A bZIP domain is found at 210 to 273 (ILKKIRRKIR…ISLMEQLRRL (64 aa)). Positions 212–241 (KKIRRKIRNKQSAQESRKKKKEYIDGLESR) are basic motif. The interval 252–273 (LQRKVFQLEKCNISLMEQLRRL) is leucine-zipper. A helical; Signal-anchor for type II membrane protein membrane pass occupies residues 287-303 (AGTCVLVLLLSFTLILL). The Lumenal segment spans residues 304–428 (PNLKPFTDTK…SRRSPHADDM (125 aa)). Positions 381-428 (TEYDPESHNHSFDQHDEHHHGDPITGHVATVTLNPRRGSRRSPHADDM) are disordered. Basic and acidic residues predominate over residues 385–402 (PESHNHSFDQHDEHHHGD). Residue Asn389 is glycosylated (N-linked (GlcNAc...) asparagine).

This sequence belongs to the bZIP family. ATF subfamily. Binds DNA as a dimer. Controlled by regulated intramembrane proteolysis (RIP). A fragment containing the cytoplasmic transcription factor domain is released by proteolysis. The cleavage seems to be performed sequentially by site-1 and site-2 proteases.

It is found in the endoplasmic reticulum membrane. The protein localises to the nucleus. Its function is as follows. Transcriptional activator. Binds the cAMP response element (CRE). Activates transcription through box-B element and CRE. Seems to function synergistically with atf6. Regulates FGF21 transcription. This Danio rerio (Zebrafish) protein is Cyclic AMP-responsive element-binding protein 3-like protein 3-B (creb3l3b).